Here is a 256-residue protein sequence, read N- to C-terminus: 5-keto-4-deoxy-D-glucarate aldolase (256 aa).

Catalysis depends on His50, which acts as the Proton acceptor. Gln151 lines the substrate pocket. Residue Glu153 coordinates Mg(2+). Positions 178 and 179 each coordinate substrate. Residue Asp179 participates in Mg(2+) binding.

Belongs to the HpcH/HpaI aldolase family. KDGluc aldolase subfamily. Homohexamer; trimer of dimers. Requires Mg(2+) as cofactor.

The enzyme catalyses 5-dehydro-4-deoxy-D-glucarate = 2-hydroxy-3-oxopropanoate + pyruvate. It carries out the reaction 2-dehydro-3-deoxy-D-glucarate = 2-hydroxy-3-oxopropanoate + pyruvate. Its pathway is carbohydrate acid metabolism; galactarate degradation; D-glycerate from galactarate: step 2/3. Functionally, catalyzes the reversible retro-aldol cleavage of both 5-keto-4-deoxy-D-glucarate and 2-keto-3-deoxy-D-glucarate to pyruvate and tartronic semialdehyde. The protein is 5-keto-4-deoxy-D-glucarate aldolase of Shigella dysenteriae serotype 1 (strain Sd197).